Reading from the N-terminus, the 24-residue chain is Humanin-like 9 (24 aa).

Belongs to the humanin family. As to expression, highly expressed in the kidney, heart muscle and testis.

It localises to the secreted. The protein resides in the cytoplasm. Its function is as follows. Plays a role as a neuroprotective and antiapoptotic factor. The chain is Humanin-like 9 from Homo sapiens (Human).